Here is a 542-residue protein sequence, read N- to C-terminus: CTP synthase (542 aa).

Residues 1-265 form an amidoligase domain region; that stretch reads MARYVFITGG…DSEVLSAFGM (265 aa). S13 contacts CTP. S13 is a binding site for UTP. Residue 14 to 19 participates in ATP binding; sequence SLGKGI. Y54 provides a ligand contact to L-glutamine. D71 lines the ATP pocket. 2 residues coordinate Mg(2+): D71 and E139. CTP-binding positions include 146-148, 186-191, and K222; these read DIE and KTKPTQ. UTP is bound by residues 186-191 and K222; that span reads KTKPTQ. In terms of domain architecture, Glutamine amidotransferase type-1 spans 291–541; sequence TIAVVGKYTG…IEATVEQSRL (251 aa). A353 contacts L-glutamine. C380 functions as the Nucleophile; for glutamine hydrolysis in the catalytic mechanism. L-glutamine contacts are provided by residues 381–384, E404, and R469; that span reads FGMQ. Active-site residues include H514 and E516.

Belongs to the CTP synthase family. In terms of assembly, homotetramer.

It carries out the reaction UTP + L-glutamine + ATP + H2O = CTP + L-glutamate + ADP + phosphate + 2 H(+). It catalyses the reaction L-glutamine + H2O = L-glutamate + NH4(+). The enzyme catalyses UTP + NH4(+) + ATP = CTP + ADP + phosphate + 2 H(+). The protein operates within pyrimidine metabolism; CTP biosynthesis via de novo pathway; CTP from UDP: step 2/2. With respect to regulation, allosterically activated by GTP, when glutamine is the substrate; GTP has no effect on the reaction when ammonia is the substrate. The allosteric effector GTP functions by stabilizing the protein conformation that binds the tetrahedral intermediate(s) formed during glutamine hydrolysis. Inhibited by the product CTP, via allosteric rather than competitive inhibition. Its function is as follows. Catalyzes the ATP-dependent amination of UTP to CTP with either L-glutamine or ammonia as the source of nitrogen. Regulates intracellular CTP levels through interactions with the four ribonucleotide triphosphates. This Bartonella henselae (strain ATCC 49882 / DSM 28221 / CCUG 30454 / Houston 1) (Rochalimaea henselae) protein is CTP synthase.